The chain runs to 384 residues: Anhydro-N-acetylmuramic acid kinase (384 aa).

9-16 (GTSYDAID) is an ATP binding site.

Belongs to the anhydro-N-acetylmuramic acid kinase family.

The enzyme catalyses 1,6-anhydro-N-acetyl-beta-muramate + ATP + H2O = N-acetyl-D-muramate 6-phosphate + ADP + H(+). Its pathway is amino-sugar metabolism; 1,6-anhydro-N-acetylmuramate degradation. It participates in cell wall biogenesis; peptidoglycan recycling. Catalyzes the specific phosphorylation of 1,6-anhydro-N-acetylmuramic acid (anhMurNAc) with the simultaneous cleavage of the 1,6-anhydro ring, generating MurNAc-6-P. Is required for the utilization of anhMurNAc either imported from the medium or derived from its own cell wall murein, and thus plays a role in cell wall recycling. This Streptomyces avermitilis (strain ATCC 31267 / DSM 46492 / JCM 5070 / NBRC 14893 / NCIMB 12804 / NRRL 8165 / MA-4680) protein is Anhydro-N-acetylmuramic acid kinase.